The chain runs to 260 residues: HTH-type transcriptional repressor NanR (260 aa).

The tract at residues 1–22 (MNAFDSQAEDSPTSLGRSLRRR) is disordered. In terms of domain architecture, HTH gntR-type spans 27 to 95 (KKLSEMVEEE…NGERARVSRP (69 aa)). Positions 55-74 (ERELMAFFNVGRPSVREALA) form a DNA-binding region, H-T-H motif.

The protein belongs to the NanR family.

Its function is as follows. Transcriptional repressor that controls expression of the genes required for the catabolism of sialic acids. The protein is HTH-type transcriptional repressor NanR of Salmonella newport (strain SL254).